Here is a 175-residue protein sequence, read N- to C-terminus: Bifunctional protein PyrR (175 aa).

Residues 40 to 41 (TR), 102 to 110 (DDVLYTGRT), arginine 135, and valine 159 each bind substrate. Positions 98–110 (VIIIDDVLYTGRT) match the PRPP-binding motif.

The protein belongs to the purine/pyrimidine phosphoribosyltransferase family. PyrR subfamily. In terms of assembly, homodimer and homohexamer; in equilibrium.

The enzyme catalyses UMP + diphosphate = 5-phospho-alpha-D-ribose 1-diphosphate + uracil. Functionally, regulates transcriptional attenuation of the pyrimidine nucleotide (pyr) operon by binding in a uridine-dependent manner to specific sites on pyr mRNA. This disrupts an antiterminator hairpin in the RNA and favors formation of a downstream transcription terminator, leading to a reduced expression of downstream genes. Its function is as follows. Also displays a weak uracil phosphoribosyltransferase activity which is not physiologically significant. The chain is Bifunctional protein PyrR from Staphylococcus haemolyticus (strain JCSC1435).